A 406-amino-acid polypeptide reads, in one-letter code: Imidazolonepropionase (406 aa).

Positions 72 and 74 each coordinate Fe(3+). The Zn(2+) site is built by histidine 72 and histidine 74. The 4-imidazolone-5-propanoate site is built by arginine 81, tyrosine 144, and histidine 177. Tyrosine 144 lines the N-formimidoyl-L-glutamate pocket. Histidine 242 provides a ligand contact to Fe(3+). Position 242 (histidine 242) interacts with Zn(2+). Position 245 (glutamine 245) interacts with 4-imidazolone-5-propanoate. Aspartate 317 lines the Fe(3+) pocket. Aspartate 317 is a binding site for Zn(2+). N-formimidoyl-L-glutamate is bound by residues asparagine 319 and glycine 321. Threonine 322 is a 4-imidazolone-5-propanoate binding site.

The protein belongs to the metallo-dependent hydrolases superfamily. HutI family. Zn(2+) serves as cofactor. The cofactor is Fe(3+).

It is found in the cytoplasm. The catalysed reaction is 4-imidazolone-5-propanoate + H2O = N-formimidoyl-L-glutamate. It functions in the pathway amino-acid degradation; L-histidine degradation into L-glutamate; N-formimidoyl-L-glutamate from L-histidine: step 3/3. Its function is as follows. Catalyzes the hydrolytic cleavage of the carbon-nitrogen bond in imidazolone-5-propanoate to yield N-formimidoyl-L-glutamate. It is the third step in the universal histidine degradation pathway. In Yersinia pseudotuberculosis serotype O:1b (strain IP 31758), this protein is Imidazolonepropionase.